The sequence spans 298 residues: MTETTRKPEWLKVRLPHGEGYERVKAIVKRTKLATVCEEARCPNIAECWGGGTATVMLMGEVCTRACRFCHVKVGAPPPLDPMEPIHLAQAVKEMDLEYIVVTSVNRDDRPDGGASHFASAIRELRRESPRTIVEVLIPDFKGVEKDLTTVAEAKPHVVAHNVETVERLTPTVRDRRAKYHQSLRVLEYLKNRPEGLYTKTSVMVGLGETDAELEQTFKDLRDVGVDVLTLGQYLQPSQYHLRVERFVTPAQFEAYKTLAESYGFLYVASGPLVRSSYRAAEFFMKGLMERERLERLG.

Positions 37, 42, 48, 63, 67, 70, and 277 each coordinate [4Fe-4S] cluster. The Radical SAM core domain maps to 49 to 266; that stretch reads WGGGTATVML…KTLAESYGFL (218 aa).

Belongs to the radical SAM superfamily. Lipoyl synthase family. [4Fe-4S] cluster serves as cofactor.

It localises to the cytoplasm. It catalyses the reaction [[Fe-S] cluster scaffold protein carrying a second [4Fe-4S](2+) cluster] + N(6)-octanoyl-L-lysyl-[protein] + 2 oxidized [2Fe-2S]-[ferredoxin] + 2 S-adenosyl-L-methionine + 4 H(+) = [[Fe-S] cluster scaffold protein] + N(6)-[(R)-dihydrolipoyl]-L-lysyl-[protein] + 4 Fe(3+) + 2 hydrogen sulfide + 2 5'-deoxyadenosine + 2 L-methionine + 2 reduced [2Fe-2S]-[ferredoxin]. Its pathway is protein modification; protein lipoylation via endogenous pathway; protein N(6)-(lipoyl)lysine from octanoyl-[acyl-carrier-protein]: step 2/2. Catalyzes the radical-mediated insertion of two sulfur atoms into the C-6 and C-8 positions of the octanoyl moiety bound to the lipoyl domains of lipoate-dependent enzymes, thereby converting the octanoylated domains into lipoylated derivatives. This Myxococcus xanthus (strain DK1622) protein is Lipoyl synthase.